The following is a 420-amino-acid chain: UDP-glucuronic acid decarboxylase 1 (420 aa).

The residue at position 1 (M1) is an N-acetylmethionine. The Cytoplasmic portion of the chain corresponds to 1–19 (MVSKALLRLVSAVNRRRMK). A helical; Signal-anchor for type II membrane protein transmembrane segment spans residues 20–40 (LLLGIALLAYVASVWGNFVNM). Residues 41–420 (RSIQENGELK…RIKKGRTRHN (380 aa)) lie on the Lumenal side of the membrane. At T94 the chain carries Phosphothreonine. NAD(+) is bound by residues G98, F99, V100, D119, N120, F122, T123, G124, D144, and V145. The UDP-alpha-D-glucuronate site is built by L149 and Y150. Positions 159 and 161 each coordinate NAD(+). Residue K177 participates in UDP-alpha-D-glucuronate binding. T178 lines the NAD(+) pocket. UDP-alpha-D-glucuronate is bound by residues N185, G188, K191, and R192. NAD(+)-binding residues include A200, Y231, and K235. Y231 acts as the Proton acceptor in catalysis. Residues Y245, Q248, and E249 each contribute to the UDP-alpha-D-glucuronate site. Positions 261, 267, and 272 each coordinate NAD(+). N316 carries an N-linked (GlcNAc...) asparagine glycan.

This sequence belongs to the NAD(P)-dependent epimerase/dehydratase family. UDP-glucuronic acid decarboxylase subfamily. Homodimer and homotetramer. Interacts with AKT1. Requires NAD(+) as cofactor.

The protein localises to the golgi apparatus. It localises to the golgi stack membrane. The enzyme catalyses UDP-alpha-D-glucuronate + H(+) = UDP-alpha-D-xylose + CO2. The protein operates within nucleotide-sugar biosynthesis; UDP-alpha-D-xylose biosynthesis; UDP-alpha-D-xylose from UDP-alpha-D-glucuronate: step 1/1. Its function is as follows. Catalyzes the NAD-dependent decarboxylation of UDP-glucuronic acid to UDP-xylose. Necessary for the biosynthesis of the core tetrasaccharide in glycosaminoglycan biosynthesis. This is UDP-glucuronic acid decarboxylase 1 (UXS1) from Pongo abelii (Sumatran orangutan).